Consider the following 449-residue polypeptide: tRNA-2-methylthio-N(6)-dimethylallyladenosine synthase (449 aa).

The MTTase N-terminal domain occupies 4–119 (RTFHIETFGC…APQALDRLVE (116 aa)). The [4Fe-4S] cluster site is built by Cys13, Cys48, Cys82, Cys158, Cys162, and Cys165. The 232-residue stretch at 144–375 (GAVPASVFVN…QTLQNRLTER (232 aa)) folds into the Radical SAM core domain. The 69-residue stretch at 378-446 (QDMVGKKVEV…KHSLLAEQAG (69 aa)) folds into the TRAM domain.

Belongs to the methylthiotransferase family. MiaB subfamily. Monomer. The cofactor is [4Fe-4S] cluster.

Its subcellular location is the cytoplasm. The catalysed reaction is N(6)-dimethylallyladenosine(37) in tRNA + (sulfur carrier)-SH + AH2 + 2 S-adenosyl-L-methionine = 2-methylsulfanyl-N(6)-dimethylallyladenosine(37) in tRNA + (sulfur carrier)-H + 5'-deoxyadenosine + L-methionine + A + S-adenosyl-L-homocysteine + 2 H(+). In terms of biological role, catalyzes the methylthiolation of N6-(dimethylallyl)adenosine (i(6)A), leading to the formation of 2-methylthio-N6-(dimethylallyl)adenosine (ms(2)i(6)A) at position 37 in tRNAs that read codons beginning with uridine. The sequence is that of tRNA-2-methylthio-N(6)-dimethylallyladenosine synthase from Nitratidesulfovibrio vulgaris (strain DP4) (Desulfovibrio vulgaris).